A 444-amino-acid chain; its full sequence is DNA primase DnaG (444 aa).

The Toprim domain maps to 186–260 (DSIIVVEGRN…EVDFVARAPP (75 aa)). The Mg(2+) site is built by Glu192, Asp234, and Asp236.

This sequence belongs to the archaeal DnaG primase family. Forms a ternary complex with MCM helicase and DNA. Component of the archaeal exosome complex. It depends on Mg(2+) as a cofactor.

It carries out the reaction ssDNA + n NTP = ssDNA/pppN(pN)n-1 hybrid + (n-1) diphosphate.. Functionally, RNA polymerase that catalyzes the synthesis of short RNA molecules used as primers for DNA polymerase during DNA replication. Also part of the exosome, which is a complex involved in RNA degradation. Acts as a poly(A)-binding protein that enhances the interaction between heteromeric, adenine-rich transcripts and the exosome. This chain is DNA primase DnaG, found in Thermoplasma volcanium (strain ATCC 51530 / DSM 4299 / JCM 9571 / NBRC 15438 / GSS1).